The sequence spans 632 residues: uncharacterized protein (632 aa).

4 consecutive transmembrane segments (helical) span residues 255–275, 506–526, 566–586, and 603–623; these read LFYA…ELRV, IALL…LTSI, MIFA…SMVF, and IVVI…AVLF.

It is found in the cell membrane. This is an uncharacterized protein from Mycoplasma pneumoniae (strain ATCC 29342 / M129 / Subtype 1) (Mycoplasmoides pneumoniae).